A 98-amino-acid polypeptide reads, in one-letter code: NADH-ubiquinone oxidoreductase chain 4L (98 aa).

Transmembrane regions (helical) follow at residues 1 to 21, 29 to 49, and 61 to 81; these read MTLV…GLLM, SLLC…VTIL, and IILL…LVMV.

The protein belongs to the complex I subunit 4L family. As to quaternary structure, core subunit of respiratory chain NADH dehydrogenase (Complex I) which is composed of 45 different subunits.

It localises to the mitochondrion inner membrane. The enzyme catalyses a ubiquinone + NADH + 5 H(+)(in) = a ubiquinol + NAD(+) + 4 H(+)(out). Core subunit of the mitochondrial membrane respiratory chain NADH dehydrogenase (Complex I) which catalyzes electron transfer from NADH through the respiratory chain, using ubiquinone as an electron acceptor. Part of the enzyme membrane arm which is embedded in the lipid bilayer and involved in proton translocation. This is NADH-ubiquinone oxidoreductase chain 4L (MT-ND4L) from Rousettus aegyptiacus (Egyptian fruit bat).